A 423-amino-acid chain; its full sequence is 5-hydroxytryptamine receptor 1A (423 aa).

Residues 1–20 form a disordered region; sequence MEGLSPGQGNNTTSSEGPFG. Residues 1-38 lie on the Extracellular side of the membrane; it reads MEGLSPGQGNNTTSSEGPFGTRGNATGISDVTFSYQVI. The segment covering 7–16 has biased composition (polar residues); it reads GQGNNTTSSE. Residues Asn10, Asn11, and Asn24 are each glycosylated (N-linked (GlcNAc...) asparagine). The chain crosses the membrane as a helical span at residues 39–59; it reads TSLLLGTLIFCAVLGNACVVA. Topologically, residues 60–73 are cytoplasmic; the sequence is AIALERSLQNVANY. The helical transmembrane segment at 74–98 threads the bilayer; sequence LIGSLAVTDLMVSVLVLPMAALYQV. The Extracellular portion of the chain corresponds to 99–107; the sequence is LNKWTLGQV. A helical membrane pass occupies residues 108–132; it reads TCDLFIALDVLCCTSSILHLCAIAL. Residues Cys109 and Cys187 are joined by a disulfide bond. Serotonin is bound by residues Asp116 and Cys120. The DRY motif; important for ligand-induced conformation changes motif lies at 133-135; the sequence is DRY. Over 133–152 the chain is Cytoplasmic; the sequence is DRYWAITDPIDYVNKRTPRR. A helical transmembrane segment spans residues 153–174; the sequence is AAALISLTWLIGFLISIPPMLG. At 175–193 the chain is on the extracellular side; that stretch reads WRTPEDRSDPDACTISKDH. A helical membrane pass occupies residues 194-216; sequence GYTIYSTFGAFYIPLLLMLVLYG. Residues 217-346 lie on the Cytoplasmic side of the membrane; it reads RIFRAARFRI…LARERKTVKT (130 aa). Residues 235 to 277 form a disordered region; it reads RKGADARSGVSPAPQPRKSVNGEPGGREWRQGPGSKAGGPLCT. Residues Lys345, Thr346, and Gly352 each contribute to the 1D-myo-inositol 4-phosphate site. The helical transmembrane segment at 347–370 threads the bilayer; it reads LGIIMGTFILCWLPFFIVALVLPF. Over 371-378 the chain is Extracellular; that stretch reads CESSCHMP. The chain crosses the membrane as a helical span at residues 379-403; it reads TLLGAIINWLGYSNSLLNPVIYAYF. Residues 396–400 carry the NPxxY motif; important for ligand-induced conformation changes and signaling motif; sequence NPVIY. Residues Phe403, Asn404, and Lys405 each coordinate 1D-myo-inositol 4-phosphate. The Cytoplasmic portion of the chain corresponds to 404–423; that stretch reads NKDFQNAFKKIVRCKFCRRR.

The protein belongs to the G-protein coupled receptor 1 family. 5-hydroxytryptamine receptor subfamily. HTR1A sub-subfamily. In terms of assembly, heterodimer; heterodimerizes with GPER1. Interacts with YIF1B. Interacts with GPR39 and GALR1.

Its subcellular location is the cell membrane. It localises to the cell projection. The protein localises to the dendrite. Its activity is regulated as follows. G-protein coupled receptor activity is regulated by lipids: phosphatidylinositol 4-phosphate increases HTR1A-mediated activity. Functionally, G-protein coupled receptor for 5-hydroxytryptamine (serotonin). Also functions as a receptor for various drugs and psychoactive substances. Ligand binding causes a conformation change that triggers signaling via guanine nucleotide-binding proteins (G proteins) and modulates the activity of downstream effectors, such as adenylate cyclase. HTR1A is coupled to G(i)/G(o) G alpha proteins and mediates inhibitory neurotransmission: signaling inhibits adenylate cyclase activity and activates a phosphatidylinositol-calcium second messenger system that regulates the release of Ca(2+) ions from intracellular stores. Beta-arrestin family members regulate signaling by mediating both receptor desensitization and resensitization processes. In Vulpes vulpes (Red fox), this protein is 5-hydroxytryptamine receptor 1A (HTR1A).